The chain runs to 120 residues: Large ribosomal subunit protein uL18 (120 aa).

Positions 1–23 are disordered; sequence MKLSRKESVRRRHQRVRRKINGT. Residues 8–20 show a composition bias toward basic residues; it reads SVRRRHQRVRRKI.

This sequence belongs to the universal ribosomal protein uL18 family. Part of the 50S ribosomal subunit; part of the 5S rRNA/L5/L18/L25 subcomplex. Contacts the 5S and 23S rRNAs.

Its function is as follows. This is one of the proteins that bind and probably mediate the attachment of the 5S RNA into the large ribosomal subunit, where it forms part of the central protuberance. This chain is Large ribosomal subunit protein uL18, found in Microcystis aeruginosa (strain NIES-843 / IAM M-2473).